The following is a 528-amino-acid chain: GMP synthase [glutamine-hydrolyzing] (528 aa).

The Glutamine amidotransferase type-1 domain maps to 3-199; that stretch reads KVAIIDFGSQ…FLDIAGCQKD (197 aa). The Nucleophile role is filled by Cys-83. Catalysis depends on residues His-174 and Glu-176. A GMPS ATP-PPase domain is found at 200 to 394; the sequence is WTVTSFIDDQ…LGISTEILMR (195 aa). 227 to 233 serves as a coordination point for ATP; the sequence is SGGVDSS.

In terms of assembly, homodimer.

The catalysed reaction is XMP + L-glutamine + ATP + H2O = GMP + L-glutamate + AMP + diphosphate + 2 H(+). It functions in the pathway purine metabolism; GMP biosynthesis; GMP from XMP (L-Gln route): step 1/1. Its function is as follows. Catalyzes the synthesis of GMP from XMP. This chain is GMP synthase [glutamine-hydrolyzing], found in Ehrlichia ruminantium (strain Welgevonden).